The chain runs to 853 residues: A-kinase anchor protein 3 (853 aa).

Residues 124 to 137 form a PKA-RII subunit binding domain region; that stretch reads VSFYANRLTNLVIA. The interval 188 to 240 is disordered; it reads RNAAPDKAPGSGDRVSGSSQSPPNLKYKSTLKIKESTKERQGPDDKPPSKKSF. A phosphoserine mark is found at serine 205 and serine 208. Residues 219–235 are compositionally biased toward basic and acidic residues; sequence KIKESTKERQGPDDKPP. Position 403 is a phosphoserine (serine 403). Tyrosine 404 is modified (phosphotyrosine). Phosphoserine is present on residues serine 635 and serine 636.

This sequence belongs to the AKAP110 family. In terms of assembly, interacts with ROPN1 and ROPN1L. Interacts with QRICH2. Post-translationally, phosphorylated by STK33 during sperm flagella assembly. Phosphorylated on tyrosine residues. In terms of tissue distribution, testis specific; only expressed in spermatids.

The protein resides in the cytoplasmic vesicle. Its subcellular location is the secretory vesicle. The protein localises to the acrosome. It is found in the cell projection. It localises to the cilium. The protein resides in the flagellum. Functionally, structural component of sperm fibrous sheath. Required for the formation of the subcellular structure of the sperm flagellum, sperm motility and male fertility. The sequence is that of A-kinase anchor protein 3 from Homo sapiens (Human).